The sequence spans 186 residues: Peptidyl-tRNA hydrolase (186 aa).

Residue tyrosine 14 participates in tRNA binding. Residue histidine 19 is the Proton acceptor of the active site. TRNA-binding residues include tyrosine 61, asparagine 63, and asparagine 107.

Belongs to the PTH family. Monomer.

Its subcellular location is the cytoplasm. It catalyses the reaction an N-acyl-L-alpha-aminoacyl-tRNA + H2O = an N-acyl-L-amino acid + a tRNA + H(+). Functionally, hydrolyzes ribosome-free peptidyl-tRNAs (with 1 or more amino acids incorporated), which drop off the ribosome during protein synthesis, or as a result of ribosome stalling. Its function is as follows. Catalyzes the release of premature peptidyl moieties from peptidyl-tRNA molecules trapped in stalled 50S ribosomal subunits, and thus maintains levels of free tRNAs and 50S ribosomes. The sequence is that of Peptidyl-tRNA hydrolase from Helicobacter pylori (strain Shi470).